Reading from the N-terminus, the 733-residue chain is 1,4-alpha-glucan branching enzyme GlgB (733 aa).

Residue aspartate 412 is the Nucleophile of the active site. Glutamate 467 serves as the catalytic Proton donor.

The protein belongs to the glycosyl hydrolase 13 family. GlgB subfamily. As to quaternary structure, monomer.

It catalyses the reaction Transfers a segment of a (1-&gt;4)-alpha-D-glucan chain to a primary hydroxy group in a similar glucan chain.. It functions in the pathway glycan biosynthesis; glycogen biosynthesis. In terms of biological role, catalyzes the formation of the alpha-1,6-glucosidic linkages in glycogen by scission of a 1,4-alpha-linked oligosaccharide from growing alpha-1,4-glucan chains and the subsequent attachment of the oligosaccharide to the alpha-1,6 position. The sequence is that of 1,4-alpha-glucan branching enzyme GlgB from Burkholderia vietnamiensis (strain G4 / LMG 22486) (Burkholderia cepacia (strain R1808)).